The sequence spans 164 residues: MAVELKKVFSTILRFLALAATVVAVIVMIRSHDSAIVLNLTFSAKYNNTPAFKYFVIAEGIASVYTIIVIFLWSKGLLGRLIVILDMVTTVLLTSSISAALAIAQVGKKGNSHAGWLPVCGQVPKFCDQAIIALVAGFVAAIVYFMLLLCSLHAVLTPIFAVKP.

The Cytoplasmic segment spans residues 1–8 (MAVELKKV). Residues 9 to 29 (FSTILRFLALAATVVAVIVMI) form a helical membrane-spanning segment. Over 30–53 (RSHDSAIVLNLTFSAKYNNTPAFK) the chain is Extracellular. A glycan (N-linked (GlcNAc...) asparagine) is linked at Asn-39. A helical transmembrane segment spans residues 54–74 (YFVIAEGIASVYTIIVIFLWS). Topologically, residues 75-80 (KGLLGR) are cytoplasmic. Residues 81–101 (LIVILDMVTTVLLTSSISAAL) form a helical membrane-spanning segment. Residues 102-129 (AIAQVGKKGNSHAGWLPVCGQVPKFCDQ) are Extracellular-facing. A helical membrane pass occupies residues 130–150 (AIIALVAGFVAAIVYFMLLLC). The Cytoplasmic segment spans residues 151–164 (SLHAVLTPIFAVKP).

This sequence belongs to the Casparian strip membrane proteins (CASP) family. Homodimer and heterodimers.

The protein localises to the cell membrane. The protein is CASP-like protein 1C2 of Ricinus communis (Castor bean).